Consider the following 554-residue polypeptide: Germacrene A synthase (554 aa).

Residues aspartate 306, aspartate 310, threonine 453, and glutamate 457 each contribute to the Mg(2+) site. A DDXXD motif motif is present at residues 306–310; it reads DDTYD.

The protein belongs to the terpene synthase family. Requires Mg(2+) as cofactor.

It is found in the cytoplasm. The protein localises to the cytosol. It catalyses the reaction (2E,6E)-farnesyl diphosphate = (+)-(R)-germacrene A + diphosphate. It participates in secondary metabolite biosynthesis; terpenoid biosynthesis. In terms of biological role, sesquiterpene synthase involved in germacrene A biosynthesis. Also produces additional sesquiterpene products, including 4,5-di-epi-aristolochene, eremophilene, alpha-selinene. The sequence is that of Germacrene A synthase from Pogostemon cablin (Patchouli).